A 295-amino-acid polypeptide reads, in one-letter code: Acetyl-coenzyme A carboxylase carboxyl transferase subunit beta (295 aa).

The disordered stretch occupies residues 1–20; the sequence is MSWLSKLMPSGIRTENTPAK. Residues 28 to 295 form the CoA carboxyltransferase N-terminal domain; the sequence is LWEKCSNCGS…QPHPQDADAA (268 aa). Positions 32, 35, 51, and 54 each coordinate Zn(2+). The C4-type zinc finger occupies 32 to 54; the sequence is CSNCGSALYGPELEENLEVCPKC.

The protein belongs to the AccD/PCCB family. In terms of assembly, acetyl-CoA carboxylase is a heterohexamer composed of biotin carboxyl carrier protein (AccB), biotin carboxylase (AccC) and two subunits each of ACCase subunit alpha (AccA) and ACCase subunit beta (AccD). Zn(2+) is required as a cofactor.

The protein localises to the cytoplasm. The catalysed reaction is N(6)-carboxybiotinyl-L-lysyl-[protein] + acetyl-CoA = N(6)-biotinyl-L-lysyl-[protein] + malonyl-CoA. It functions in the pathway lipid metabolism; malonyl-CoA biosynthesis; malonyl-CoA from acetyl-CoA: step 1/1. Component of the acetyl coenzyme A carboxylase (ACC) complex. Biotin carboxylase (BC) catalyzes the carboxylation of biotin on its carrier protein (BCCP) and then the CO(2) group is transferred by the transcarboxylase to acetyl-CoA to form malonyl-CoA. In Xanthomonas euvesicatoria pv. vesicatoria (strain 85-10) (Xanthomonas campestris pv. vesicatoria), this protein is Acetyl-coenzyme A carboxylase carboxyl transferase subunit beta.